Reading from the N-terminus, the 701-residue chain is MNPVTKQFQFGQSTVTLETGRIARQATGAVLVTMDDVSVLVTVVGAKSPAEGRDFFPLSVHYQEKTYAAGRIPGGFFKREGRPSEKETLTSRLIDRPIRPLFPEGFMNEVQVVCTVVSTNKKSDPDIAAMIGTSAALAISGIPFAGPIGAARVGFHPEIGYILNPTYEQLQSSSLDMVVAGTEDAVLMVESEADELTEDQMLGAVLFAHDEFQAVIRAVKELAAEAGKPAWDWKAPAENTVLVNAIKAELGEAISQAYTITIKQDRYNRLGELRDQAVALFAGEEEGKFPASEVKDVFGLLEYRTVRENIVNGKPRIDGRDTRTVRPLRIEVGVLGKTHGSALFTRGETQALVVATLGTARDAQLLDTLEGERKDAFMLHYNFPPFSVGECGRMGSPGRREIGHGRLARRGVAAMLPTQDEFPYTIRVVSEITESNGSSSMASVCGASLALMDAGVPVKAPVAGIAMGLVKEGEKFAVLTDILGDEDHLGDMDFKVAGTDKGVTALQMDIKINGITEEIMEIALGQALEARLNILGQMNQVIAKPRAELSENAPTMLQMKIDSDKIRDVIGKGGATIRGICEETKASIDIEDDGSVKIYGETKEAAEAAKLRVLAITAEAEIGKIYVGKVERIVDFGAFVNILPGKDGLVHISQISDKRIDKVTDVLQEGQEVKVLVLDVDNRGRIKLSIKDVAAAEASGV.

Residues D487 and D493 each coordinate Mg(2+). A KH domain is found at 554-613 (PTMLQMKIDSDKIRDVIGKGGATIRGICEETKASIDIEDDGSVKIYGETKEAAEAAKLRV). In terms of domain architecture, S1 motif spans 623–691 (GKIYVGKVER…NRGRIKLSIK (69 aa)).

The protein belongs to the polyribonucleotide nucleotidyltransferase family. As to quaternary structure, component of the RNA degradosome, which is a multiprotein complex involved in RNA processing and mRNA degradation. Mg(2+) serves as cofactor.

It localises to the cytoplasm. The enzyme catalyses RNA(n+1) + phosphate = RNA(n) + a ribonucleoside 5'-diphosphate. Its function is as follows. Involved in mRNA degradation. Catalyzes the phosphorolysis of single-stranded polyribonucleotides processively in the 3'- to 5'-direction. The chain is Polyribonucleotide nucleotidyltransferase from Pseudomonas aeruginosa (strain LESB58).